The sequence spans 72 residues: Penaeidin-2a (72 aa).

The first 21 residues, 1-21 (MRLVVCLVFLASFALVCQGEA), serve as a signal peptide directing secretion. 3 cysteine pairs are disulfide-bonded: Cys45–Cys59, Cys48–Cys66, and Cys60–Cys67. Lys71 bears the Lysine amide mark.

In terms of tissue distribution, higher expression in hemocytes and to a lesser extent in heart, testis, gills, intestine, lymphoid organ and hepatopancreas. Traces in eyes and subcuticular epithelium. Not present in the brain.

The protein localises to the cytoplasmic granule. Functionally, antibacterial activity against M.luteus and E.coli bacteria. Antifungal activity against N.crassa and F.oxysporum. Presents chitin-binding activity. This Penaeus vannamei (Whiteleg shrimp) protein is Penaeidin-2a.